The primary structure comprises 382 residues: MKYELDKTSGNARRGRLVFERPQGTFSVETPAFMPVGTYGTVKGMTPEEVRATGAEILLGNTFHLWLRPGQEIMRKHGDLHDFMQWHRPILTDSGGFQVFSLGKLRKITEEGVKFQNPINGERIFLSPEKSMEIQYDLGSDIVMIFDECTPYPATFDYAKKSMEMSLRWAKRSRDRFDELGNKNALFGIIQGGVFEELRKVSLEGLVNIGFDGYAVGGLAVGEPKEDMHRILEYICPQIPADKPRYLMGVGKPEDLVEGVRRGIDMFDCVMPTRNARNGHLFVTDGIVKIRNAKYRDDTSPLDPECDCYTCKNYTKAYLYHLDKCGEILGARLNTIHNLRYYQRLMAEIRQAIEDDRFDDFVVEFYARMGKPVPPLQLADKS.

The active-site Proton acceptor is Asp93. Substrate-binding positions include 93-97 (DSGGF), Asp147, Gln191, and Gly218. Residues 249–255 (GVGKPED) are RNA binding. The Nucleophile role is filled by Asp268. The tract at residues 273-277 (TRNAR) is RNA binding; important for wobble base 34 recognition. Cys306, Cys308, Cys311, and His337 together coordinate Zn(2+).

It belongs to the queuine tRNA-ribosyltransferase family. In terms of assembly, homodimer. Within each dimer, one monomer is responsible for RNA recognition and catalysis, while the other monomer binds to the replacement base PreQ1. Zn(2+) is required as a cofactor.

It carries out the reaction 7-aminomethyl-7-carbaguanine + guanosine(34) in tRNA = 7-aminomethyl-7-carbaguanosine(34) in tRNA + guanine. Its pathway is tRNA modification; tRNA-queuosine biosynthesis. Functionally, catalyzes the base-exchange of a guanine (G) residue with the queuine precursor 7-aminomethyl-7-deazaguanine (PreQ1) at position 34 (anticodon wobble position) in tRNAs with GU(N) anticodons (tRNA-Asp, -Asn, -His and -Tyr). Catalysis occurs through a double-displacement mechanism. The nucleophile active site attacks the C1' of nucleotide 34 to detach the guanine base from the RNA, forming a covalent enzyme-RNA intermediate. The proton acceptor active site deprotonates the incoming PreQ1, allowing a nucleophilic attack on the C1' of the ribose to form the product. After dissociation, two additional enzymatic reactions on the tRNA convert PreQ1 to queuine (Q), resulting in the hypermodified nucleoside queuosine (7-(((4,5-cis-dihydroxy-2-cyclopenten-1-yl)amino)methyl)-7-deazaguanosine). This chain is Queuine tRNA-ribosyltransferase, found in Haemophilus influenzae (strain PittEE).